The chain runs to 341 residues: Phosphate acyltransferase (341 aa).

The protein belongs to the PlsX family. In terms of assembly, homodimer. Probably interacts with PlsY.

The protein localises to the cytoplasm. It catalyses the reaction a fatty acyl-[ACP] + phosphate = an acyl phosphate + holo-[ACP]. Its pathway is lipid metabolism; phospholipid metabolism. In terms of biological role, catalyzes the reversible formation of acyl-phosphate (acyl-PO(4)) from acyl-[acyl-carrier-protein] (acyl-ACP). This enzyme utilizes acyl-ACP as fatty acyl donor, but not acyl-CoA. In Aliivibrio salmonicida (strain LFI1238) (Vibrio salmonicida (strain LFI1238)), this protein is Phosphate acyltransferase.